Consider the following 183-residue polypeptide: Microfibrillar-associated protein 2 (183 aa).

A signal peptide (or 18) is located at residues 1 to 16 (MRAACLFLLFMPGLLA). Q17 carries the pyrrolidone carboxylic acid modification. Residues Y46, Y47, and Y49 each carry the sulfotyrosine modification. Positions 52–92 (VSPRTPEEQFQSQQQVQQEVIPAPTPEPAAAGDLETEPTEP) are disordered. A compositionally biased stretch (low complexity) spans 59 to 70 (EQFQSQQQVQQE). A ShKT domain is found at 153–183 (CRDKFSKCGVMAVSGLCQSVAASCARSCGGC). Cystine bridges form between C153/C183, C160/C176, and C169/C180.

This sequence belongs to the MFAP family. In terms of assembly, forms a ternary complex with BGN and ELN. Interacts with FBN1 (via N-terminal domain) and FBN2. In terms of processing, forms intermolecular disulfide bonds either with other MAGP-1 molecules or with other components of the microfibrils. May form transglutaminase cross-links. O-glycosylated.

It is found in the secreted. The protein resides in the extracellular space. The protein localises to the extracellular matrix. Component of the elastin-associated microfibrils. The polypeptide is Microfibrillar-associated protein 2 (Mfap2) (Mus musculus (Mouse)).